Consider the following 861-residue polypeptide: E3 ubiquitin-protein ligase HECTD3 (861 aa).

Ala2 carries the N-acetylalanine modification. Ser12 is subject to Phosphoserine. One can recognise a DOC domain in the interval 219–397 (DEDLIHFLYD…TSLVRYPRLE (179 aa)). The region spanning 512–857 (YEKPLDYRWP…NCVAIDTDMS (346 aa)) is the HECT domain. Cys823 acts as the Glycyl thioester intermediate in catalysis.

As to quaternary structure, interacts with TRIOBP. Interacts with STX8.

The protein localises to the cytoplasm. It localises to the perinuclear region. It catalyses the reaction S-ubiquitinyl-[E2 ubiquitin-conjugating enzyme]-L-cysteine + [acceptor protein]-L-lysine = [E2 ubiquitin-conjugating enzyme]-L-cysteine + N(6)-ubiquitinyl-[acceptor protein]-L-lysine.. The protein operates within protein modification; protein ubiquitination. In terms of biological role, E3 ubiquitin ligases accepts ubiquitin from an E2 ubiquitin-conjugating enzyme in the form of a thioester and then directly transfers the ubiquitin to targeted substrates. Mediates ubiquitination of TRIOBP and its subsequent proteasomal degradation, thus facilitating cell cycle progression by regulating the turn-over of TRIOBP. Mediates also ubiquitination of STX8. This is E3 ubiquitin-protein ligase HECTD3 (HECTD3) from Homo sapiens (Human).